A 571-amino-acid polypeptide reads, in one-letter code: uncharacterized protein (571 aa).

The Cytoplasmic portion of the chain corresponds to 1–3 (MNS). A helical transmembrane segment spans residues 4-24 (LQILSFVGFTLLVAVITWWKV). The Periplasmic segment spans residues 25–74 (RKTDTGSQQGYFLAGRSLKAPVIAASLMLTNLSTEQLVGLSGQAYKSGMS). A helical membrane pass occupies residues 75 to 95 (VMGWEVTSAVTLIFLALIFLP). Topologically, residues 96–118 (RYLKRGIATIPDFLEERYDKTTR) are cytoplasmic. Residues 119–139 (IIIDFCFLIATGVCFLPIVLY) form a helical membrane-spanning segment. The Periplasmic segment spans residues 140-162 (SGALALNSLFHVGESLQISHGAA). The helical transmembrane segment at 163–183 (IWLLVILLGLAGILYAVIGGL) threads the bilayer. At 184 to 191 (RAMAVADS) the chain is on the cytoplasmic side. The chain crosses the membrane as a helical span at residues 192-212 (INGIGLVIGGLMVPVFGLIAM). Residues 213–240 (GKGSFMQGIEQLTTVHAEKLNSIGGPTD) lie on the Periplasmic side of the membrane. The helical transmembrane segment at 241 to 261 (PLPIGAAFTGLILVNTFYWCT) threads the bilayer. Residues 262–283 (NQGIVQRTLASKSLAEGQKGAL) lie on the Cytoplasmic side of the membrane. A helical transmembrane segment spans residues 284–304 (LTAVLKMLDPLVLVLPGLIAF). Over 305 to 324 (HLYQDLPKADMAYPTLVNNV) the chain is Periplasmic. A helical membrane pass occupies residues 325-345 (LPVPMVGFFGAVLFGAVISTF). The Cytoplasmic segment spans residues 346-380 (NGFLNSASTLFSMGIYRRIINQNAEPQQLVTVGRK). Residues 381-401 (FGFFIAIVSVLVAPWIANAPQ) form a helical membrane-spanning segment. Topologically, residues 402–415 (GLYSWMKQLNGIYN) are periplasmic. A helical membrane pass occupies residues 416 to 436 (VPLVTIIIMGFFFPRIPALAA). Position 437 (K437) is a topological domain, cytoplasmic. The helical transmembrane segment at 438-458 (VAMGIGIISYITINYLVKFDF) threads the bilayer. The Periplasmic segment spans residues 459–460 (HF). A helical transmembrane segment spans residues 461–481 (LYVLACTFCINVVVMLVIGFI). Over 482 to 505 (KPRATPFTFKDAFAVDMKPWKNVK) the chain is Cytoplasmic. A helical membrane pass occupies residues 506–526 (IASIGILFAMIGVYAGLAEFG). Residues 527–532 (GYGTRW) are Periplasmic-facing. Residues 533-553 (LAMISYFIAAVVIVYLIFDSW) traverse the membrane as a helical segment. At 554 to 571 (RHRHDPAVTFTPDGKDSL) the chain is on the cytoplasmic side.

The protein belongs to the sodium:solute symporter (SSF) (TC 2.A.21) family.

Its subcellular location is the cell inner membrane. This is an uncharacterized protein from Escherichia coli (strain K12).